A 205-amino-acid chain; its full sequence is MSDPVRVGIIDHGSGNLHSARRALRQVGAEVIVSNDPSALLDTDALVLPGVGALAVCMTGLRAMGGARLVRQWVDEGRPLLGICVGHQMLFERGRERDVDVKCLGVLPGVVEELPAERLPHMGWNTVTPATDSALFQGVQERFYFVHSYGVVVTGPHDHFTTATHQGATFVAAAEYGPVTSTQFHPEKSGIAGLALLTRWLNQLS.

The region spanning 6 to 205 (RVGIIDHGSG…LLTRWLNQLS (200 aa)) is the Glutamine amidotransferase type-1 domain. Cysteine 84 functions as the Nucleophile in the catalytic mechanism. Residues histidine 185 and glutamate 187 contribute to the active site.

As to quaternary structure, heterodimer of HisH and HisF.

The protein localises to the cytoplasm. The enzyme catalyses 5-[(5-phospho-1-deoxy-D-ribulos-1-ylimino)methylamino]-1-(5-phospho-beta-D-ribosyl)imidazole-4-carboxamide + L-glutamine = D-erythro-1-(imidazol-4-yl)glycerol 3-phosphate + 5-amino-1-(5-phospho-beta-D-ribosyl)imidazole-4-carboxamide + L-glutamate + H(+). It carries out the reaction L-glutamine + H2O = L-glutamate + NH4(+). The protein operates within amino-acid biosynthesis; L-histidine biosynthesis; L-histidine from 5-phospho-alpha-D-ribose 1-diphosphate: step 5/9. Functionally, IGPS catalyzes the conversion of PRFAR and glutamine to IGP, AICAR and glutamate. The HisH subunit catalyzes the hydrolysis of glutamine to glutamate and ammonia as part of the synthesis of IGP and AICAR. The resulting ammonia molecule is channeled to the active site of HisF. This is Imidazole glycerol phosphate synthase subunit HisH from Cutibacterium acnes (strain DSM 16379 / KPA171202) (Propionibacterium acnes).